The following is a 636-amino-acid chain: Probable Xaa-Pro aminopeptidase P (636 aa).

The Mn(2+) site is built by Asp414, Asp425, Glu523, and Glu537.

The protein belongs to the peptidase M24B family. Requires Mn(2+) as cofactor.

The catalysed reaction is Release of any N-terminal amino acid, including proline, that is linked to proline, even from a dipeptide or tripeptide.. Its function is as follows. Catalyzes the removal of a penultimate prolyl residue from the N-termini of peptides. The polypeptide is Probable Xaa-Pro aminopeptidase P (AMPP) (Ajellomyces capsulatus (strain H143) (Darling's disease fungus)).